A 313-amino-acid polypeptide reads, in one-letter code: Formate-nitrite transporter (313 aa).

At 1-47 (MPKSNTKYVIDPLSVKTSCSSEESYIRCVEYGKSKAHYSSLILLAKA) the chain is on the cytoplasmic side. The helical transmembrane segment at 48–68 (ILAGVFVGVCAHASGIAGGLF) threads the bilayer. The Extracellular segment spans residues 69–77 (YYHKLREYV). A helical membrane pass occupies residues 78–98 (GASMSAFVYGFTFPIAFLCII). The Cytoplasmic portion of the chain corresponds to 99–128 (CTGSDLFTGNTLAVTTALLHGKVSCLEYVR). A helical membrane pass occupies residues 129–149 (VMCISLFGNYVGAVSFAFFVS). Residues 150–185 (YGSGAFHKKEQVDKNHIFQFLNDIAVKKVNHTFVEC) lie on the Extracellular side of the membrane. Residue Asn-179 is glycosylated (N-linked (GlcNAc...) asparagine). Residues 186-206 (ICLAIGCNIFVCLAVYFVLSI) form a helical membrane-spanning segment. The Cytoplasmic portion of the chain corresponds to 207–211 (KDGSG). Residues 212–232 (MVFSVFFAVYAFAIAGYEHII) traverse the membrane as a helical segment. Topologically, residues 233-260 (ANIYTLNISLMIDTEVSFTQVYFKNLLP) are extracellular. The N-linked (GlcNAc...) asparagine glycan is linked to Asn-239. A helical transmembrane segment spans residues 261-281 (TLIGNYIAGALVLACPLFFIY). At 282 to 313 (RSYYINYEKMNEPSGGSLRSISIEMKNDGGAT) the chain is on the cytoplasmic side.

It belongs to the FNT transporter (TC 1.A.16) family. As to quaternary structure, homopentamer.

The protein localises to the cell membrane. Its subcellular location is the vacuole membrane. The catalysed reaction is (S)-lactate(in) + H(+)(in) = (S)-lactate(out) + H(+)(out). It catalyses the reaction formate(in) + H(+)(in) = formate(out) + H(+)(out). It carries out the reaction pyruvate(out) + H(+)(out) = pyruvate(in) + H(+)(in). The enzyme catalyses acetate(out) + H(+)(out) = acetate(in) + H(+)(in). Inhibited by the Malaria Box compound MMV007839 and its derivatives BH296 and BH267.meta. In terms of biological role, monocarboxylate-proton symporter that mediates the efflux of the waste product lactate in the intraerythrocytic parasites; active in acidic-to-neutral pH range. Transports L-lactate. This Plasmodium ovale protein is Formate-nitrite transporter.